The primary structure comprises 391 residues: Winged helix repair factor 1 (391 aa).

Composition is skewed to low complexity over residues 1-24 (MNIK…PSPI) and 49-63 (LSFN…SNIN). A disordered region spans residues 1–95 (MNIKRNQNNS…SITTTTATST (95 aa)). Residues 64–74 (GEEDNDDDDRE) show a composition bias toward acidic residues. The span at 82–95 (NPNPSITTTTATST) shows a compositional bias: low complexity.

It belongs to the STK19 family.

It is found in the nucleus. DNA-binding protein which is required for efficient transcription-coupled nucleotide excision repair. The sequence is that of Winged helix repair factor 1 from Dictyostelium discoideum (Social amoeba).